Reading from the N-terminus, the 409-residue chain is Histidine--tRNA ligase (409 aa).

It belongs to the class-II aminoacyl-tRNA synthetase family.

It is found in the cytoplasm. It carries out the reaction tRNA(His) + L-histidine + ATP = L-histidyl-tRNA(His) + AMP + diphosphate + H(+). In Methanosphaerula palustris (strain ATCC BAA-1556 / DSM 19958 / E1-9c), this protein is Histidine--tRNA ligase.